Here is a 118-residue protein sequence, read N- to C-terminus: Elicitin (118 aa).

Residues 1-20 form the signal peptide; that stretch reads MNFRALFAATVAALVGSTSA. 3 disulfide bridges follow: Cys-23–Cys-91, Cys-47–Cys-76, and Cys-71–Cys-115.

It belongs to the elicitin family.

The protein resides in the secreted. In terms of biological role, induces local and distal defense responses (incompatible hypersensitive reaction) in plants from the solanaceae and cruciferae families. Elicits leaf necrosis and causes the accumulation of pathogenesis-related proteins. Might interact with the lipidic molecules of the plasma membrane. This Phytophthora nicotianae (Potato buckeye rot agent) protein is Elicitin (PARA1).